A 552-amino-acid chain; its full sequence is Putative transport protein PBPRA2144 (552 aa).

5 consecutive transmembrane segments (helical) span residues 4–24 (IALS…IGNW), 26–46 (ICGV…VGHF), 65–85 (FGLI…FFAS), 95–115 (AFAA…YKIF), and 158–178 (MGYA…MWIL). 2 RCK C-terminal domains span residues 188–276 (KEAE…VIGE) and 279–361 (DASL…IVGN). A run of 6 helical transmembrane segments spans residues 371–391 (MLPV…PFYL), 394–414 (FPAA…LILA), 439–459 (IVLF…DTLV), 464–484 (LSWM…VGFL), 493–513 (YLTI…LAFA), and 532–552 (PLVM…LWAV).

The protein belongs to the AAE transporter (TC 2.A.81) family. YidE subfamily.

The protein resides in the cell membrane. The protein is Putative transport protein PBPRA2144 of Photobacterium profundum (strain SS9).